The sequence spans 244 residues: tRNA (guanine-N(1)-)-methyltransferase (244 aa).

S-adenosyl-L-methionine is bound by residues glycine 113 and 133 to 138; that span reads IGDYVL.

It belongs to the RNA methyltransferase TrmD family. In terms of assembly, homodimer.

It localises to the cytoplasm. It carries out the reaction guanosine(37) in tRNA + S-adenosyl-L-methionine = N(1)-methylguanosine(37) in tRNA + S-adenosyl-L-homocysteine + H(+). Specifically methylates guanosine-37 in various tRNAs. The polypeptide is tRNA (guanine-N(1)-)-methyltransferase (Bacillus anthracis (strain A0248)).